Consider the following 329-residue polypeptide: Biotin synthase (329 aa).

The Radical SAM core domain maps to 36-260 (GEIQLCTLLS…VAVARITMPK (225 aa)). Cys51, Cys55, and Cys58 together coordinate [4Fe-4S] cluster. [2Fe-2S] cluster contacts are provided by Cys95, Cys126, Cys186, and Arg264.

Belongs to the radical SAM superfamily. Biotin synthase family. Homodimer. The cofactor is [4Fe-4S] cluster. It depends on [2Fe-2S] cluster as a cofactor.

The enzyme catalyses (4R,5S)-dethiobiotin + (sulfur carrier)-SH + 2 reduced [2Fe-2S]-[ferredoxin] + 2 S-adenosyl-L-methionine = (sulfur carrier)-H + biotin + 2 5'-deoxyadenosine + 2 L-methionine + 2 oxidized [2Fe-2S]-[ferredoxin]. It participates in cofactor biosynthesis; biotin biosynthesis; biotin from 7,8-diaminononanoate: step 2/2. Functionally, catalyzes the conversion of dethiobiotin (DTB) to biotin by the insertion of a sulfur atom into dethiobiotin via a radical-based mechanism. This chain is Biotin synthase, found in Sphingopyxis alaskensis (strain DSM 13593 / LMG 18877 / RB2256) (Sphingomonas alaskensis).